The chain runs to 502 residues: Probable malate:quinone oxidoreductase (502 aa).

This sequence belongs to the MQO family. FAD serves as cofactor.

It catalyses the reaction (S)-malate + a quinone = a quinol + oxaloacetate. Its pathway is carbohydrate metabolism; tricarboxylic acid cycle; oxaloacetate from (S)-malate (quinone route): step 1/1. In Parasynechococcus marenigrum (strain WH8102), this protein is Probable malate:quinone oxidoreductase.